Reading from the N-terminus, the 234-residue chain is UPF0758 protein STH371 (234 aa).

The region spanning 110 to 232 (DLCNPRAVFE…YTSFRERGLL (123 aa)) is the MPN domain. Residues histidine 181, histidine 183, and aspartate 194 each contribute to the Zn(2+) site. Positions 181 to 194 (HNHPSGDPTPSRED) match the JAMM motif motif.

It belongs to the UPF0758 family.

This is UPF0758 protein STH371 from Symbiobacterium thermophilum (strain DSM 24528 / JCM 14929 / IAM 14863 / T).